A 77-amino-acid polypeptide reads, in one-letter code: MSDVAERVKKIVVEHLGVEEAKVTENASFIDDLGADSLDTVELVMAFEEEFSVEIPDDAAEKILTVKDAIDFITANS.

In terms of domain architecture, Carrier spans 2-77 (SDVAERVKKI…DAIDFITANS (76 aa)). The residue at position 37 (serine 37) is an O-(pantetheine 4'-phosphoryl)serine.

The protein belongs to the acyl carrier protein (ACP) family. Post-translationally, 4'-phosphopantetheine is transferred from CoA to a specific serine of apo-ACP by AcpS. This modification is essential for activity because fatty acids are bound in thioester linkage to the sulfhydryl of the prosthetic group.

Its subcellular location is the cytoplasm. It participates in lipid metabolism; fatty acid biosynthesis. Functionally, carrier of the growing fatty acid chain in fatty acid biosynthesis. The polypeptide is Acyl carrier protein (Paramagnetospirillum magneticum (strain ATCC 700264 / AMB-1) (Magnetospirillum magneticum)).